We begin with the raw amino-acid sequence, 714 residues long: Rho-GTPase-activating protein RGD2 (714 aa).

The F-BAR domain maps to 2–441; the sequence is LSFCDYFWSE…LENDIDPTAD (440 aa). The region spanning 218-298 is the DEP domain; that stretch reads PKTDYKLPLI…WKNTAYMFAN (81 aa). Positions 475-704 constitute a Rho-GAP domain; the sequence is VDLETRCRLD…DLLTHKKQIF (230 aa).

As to quaternary structure, interacts with CDC42 and RHO5.

Functionally, acts in signal transduction. Activates CDC42 and RHO5. The protein is Rho-GTPase-activating protein RGD2 (RGD2) of Saccharomyces cerevisiae (strain ATCC 204508 / S288c) (Baker's yeast).